Consider the following 629-residue polypeptide: MQLVQLANFVLDNLVQSRIGFIVLFHCWQSDESLKFAQQFMKPIHPILVYHQFVQMRGVLNWSHLELSYMGHTQPTLAIYVDIKCDQTQDLLEEASREQIYNQHYHWLLVGNQSKLEFYDLFGLFNISIDADVSYVKEQIQDNNDSVAYAVHDVYNNGKIIGGQLNVTGSHEMSCDPFVCRRTRHLSSLQKRSKYGNREQLTDVVLRVATVVTQRPLTLSDDELIRFLSQENDTHIDSLARFGFHLTLILRDLLHCKMKFIFSDSWSKSDVVGGSVGAVVDQTADLTATPSLATEGRLKYLSAIIETGFFRSVCIFRTPHNAGLRGDVFLQPFSPLVWYLFGGVLSLIGVLLWITFYMECKRMQKRWRLDYLPSLLSTFLISFGAACIQSSSLIPRSAGGRLIYFALFLISFIMYNYYTSVVVSSLLSSPVKSKIKTMRQLAESSLTVGLEPLPFTKSYLNYSRLPEIHLFIKRKIESQTQNPELWLPAEQGVLRVRDNPGYVYVFETSSGYAYVERYFTAQEICDLNEVLFRPEQLFYTHLHRNSTYKELFRLRFLRILETGVYRKQRSYWVHMKLHCVAQNFVITVGMEYVAPLLLMLICADILVVVILLVELAWKRFFTRHLTFHP.

Topologically, residues 1–335 (MQLVQLANFV…GDVFLQPFSP (335 aa)) are extracellular. Residues Asn-61, Asn-112, Asn-126, Asn-144, Asn-166, and Asn-232 are each glycosylated (N-linked (GlcNAc...) asparagine). The chain crosses the membrane as a helical span at residues 336 to 356 (LVWYLFGGVLSLIGVLLWITF). Residues 357 to 374 (YMECKRMQKRWRLDYLPS) lie on the Cytoplasmic side of the membrane. A helical transmembrane segment spans residues 375 to 395 (LLSTFLISFGAACIQSSSLIP). Residues 396–402 (RSAGGRL) lie on the Extracellular side of the membrane. Residues 403 to 423 (IYFALFLISFIMYNYYTSVVV) traverse the membrane as a helical segment. At 424–592 (SSLLSSPVKS…NFVITVGMEY (169 aa)) the chain is on the cytoplasmic side. The chain crosses the membrane as a helical span at residues 593–613 (VAPLLLMLICADILVVVILLV). The Extracellular segment spans residues 614-629 (ELAWKRFFTRHLTFHP).

The protein belongs to the glutamate-gated ion channel (TC 1.A.10.1) family. Expressed in acetic-acid-sensing neurons in the antennal coeloconic 2 (ac2) and antennal coeloconic 3 (ac3) sensilla class of sensory hairs (at protein level).

It is found in the cell membrane. It localises to the cell projection. The protein localises to the dendrite. Functionally, odorant receptor for acetic and propionic acid. Functions as part of an olfactory receptor complex including the ionotropic receptor coreceptor Ir8a. The polypeptide is Ionotropic receptor 75a (Drosophila melanogaster (Fruit fly)).